The primary structure comprises 564 residues: Mitochondrial distribution and morphology protein 34 (564 aa).

Residues 1 to 208 form the SMP-LTD domain; it reads MAFNFNWSPL…VPEYRDRESE (208 aa). Disordered stretches follow at residues 208–240, 336–397, 404–423, 434–517, and 532–564; these read ESVNTLDQSSGPGQDPLASPPQDPVDASGNALN, SGGS…SAPT, QFSEEKNDDPVTPPLAPQND, RISQ…DPRQ, and IQEEKVGPSGSRPFPDFWDDHSREEIPPPAYGH. Polar residues predominate over residues 209–219; it reads SVNTLDQSSGP. The segment covering 351–365 has biased composition (basic residues); sequence SGRHPRPHGKKRKKR. Basic and acidic residues predominate over residues 366–376; the sequence is VVDLRRPKTTD. The span at 380-390 shows a compositional bias: low complexity; it reads SVSGESVFSSE. Composition is skewed to polar residues over residues 438-462 and 477-503; these read GEHTLTRRSVPSMSEVAQPSSSRNS and PRNSIRLPSSDRANNPLTTAHLPSSAI.

Belongs to the MDM34 family. In terms of assembly, component of the ER-mitochondria encounter structure (ERMES) or MDM complex, composed of mmm1, mdm10, mdm12 and mdm34.

The protein localises to the mitochondrion outer membrane. Its function is as follows. Component of the ERMES/MDM complex, which serves as a molecular tether to connect the endoplasmic reticulum (ER) and mitochondria. Components of this complex are involved in the control of mitochondrial shape and protein biogenesis, and function in nonvesicular lipid trafficking between the ER and mitochondria. Mdm34 is required for the interaction of the ER-resident membrane protein mmm1 and the outer mitochondrial membrane-resident beta-barrel protein mdm10. This Talaromyces stipitatus (strain ATCC 10500 / CBS 375.48 / QM 6759 / NRRL 1006) (Penicillium stipitatum) protein is Mitochondrial distribution and morphology protein 34.